The following is a 517-amino-acid chain: Benzoate 4-monooxygenase bphA (517 aa).

The helical transmembrane segment at 4-24 threads the bilayer; the sequence is LLLSPYGAYLGLALLVLYYLL. N-linked (GlcNAc...) asparagine glycans are attached at residues asparagine 282 and asparagine 325. Cysteine 461 provides a ligand contact to heme.

Belongs to the cytochrome P450 family. The cofactor is heme.

Its subcellular location is the membrane. It catalyses the reaction benzoate + reduced [NADPH--hemoprotein reductase] + O2 = 4-hydroxybenzoate + oxidized [NADPH--hemoprotein reductase] + H2O + H(+). Its function is as follows. Cytochrome P450 monooxygenase; part of the benzoic acid degradation pathway also known as the protocatechuic acid pathway. Benzoic acid debradation begins with the conversion of benzoic acid into 4-hydroxybenzoic acid through hydroxylation by the benzoate-4-monooxygenase bphA, and its partner NADPH-cytochrome P450 reductase cprA which act as a mediator in electron donation from NADPH. 4-Hydroxybenzoic acid is then converted into 3,4-dihydroxybenzoic acid (also called protocatechuic acid) by the p-hydroxybenzoate-m-hydroxylase phhA. Protocatechuic acid is converted into 3-carboxy-cis,cis-muconic acid by the intradiol ring-cleavage dioxygenase prcA, which is further metabolized through the 3-oxoadipate pathway to finally enter the tricarboxylic acid cycle (TCA). Responsible for cytochrome P450 dependent benzoate hydroxylation in microsomes; requires cprA as the mediator in electron donation from NADPH. This chain is Benzoate 4-monooxygenase bphA, found in Aspergillus niger.